A 456-amino-acid polypeptide reads, in one-letter code: Histidine--tRNA ligase (456 aa).

Belongs to the class-II aminoacyl-tRNA synthetase family. In terms of assembly, homodimer.

The protein localises to the cytoplasm. It carries out the reaction tRNA(His) + L-histidine + ATP = L-histidyl-tRNA(His) + AMP + diphosphate + H(+). The chain is Histidine--tRNA ligase (hisS) from Borreliella burgdorferi (strain ATCC 35210 / DSM 4680 / CIP 102532 / B31) (Borrelia burgdorferi).